Reading from the N-terminus, the 369-residue chain is Glutamate 5-kinase (369 aa).

ATP is bound at residue K8. S49, D136, and N148 together coordinate substrate. ATP is bound by residues T168 to D169 and T211 to K217. The PUA domain occupies K276–A354.

The protein belongs to the glutamate 5-kinase family.

It localises to the cytoplasm. It carries out the reaction L-glutamate + ATP = L-glutamyl 5-phosphate + ADP. Its pathway is amino-acid biosynthesis; L-proline biosynthesis; L-glutamate 5-semialdehyde from L-glutamate: step 1/2. In terms of biological role, catalyzes the transfer of a phosphate group to glutamate to form L-glutamate 5-phosphate. This is Glutamate 5-kinase from Thermosynechococcus vestitus (strain NIES-2133 / IAM M-273 / BP-1).